A 321-amino-acid polypeptide reads, in one-letter code: Gap junction delta-2 protein (321 aa).

The Cytoplasmic portion of the chain corresponds to methionine 1 to serine 19. The chain crosses the membrane as a helical span at residues threonine 20–glycine 42. At glutamate 43–histidine 75 the chain is on the extracellular side. A helical transmembrane segment spans residues isoleucine 76 to valine 98. Topologically, residues histidine 99–arginine 197 are cytoplasmic. A disordered region spans residues proline 120–glutamate 141. The segment covering glycine 125–glycine 137 has biased composition (gly residues). A helical membrane pass occupies residues phenylalanine 198–leucine 220. Residues tyrosine 221–valine 252 lie on the Extracellular side of the membrane. The helical transmembrane segment at phenylalanine 253–leucine 275 threads the bilayer. The Cytoplasmic segment spans residues glycine 276–valine 321.

This sequence belongs to the connexin family. Delta-type subfamily. A connexon is composed of a hexamer of connexins. In terms of tissue distribution, highly expressed in neurons.

It is found in the cell membrane. Its subcellular location is the cell junction. It localises to the gap junction. In terms of biological role, one gap junction consists of a cluster of closely packed pairs of transmembrane channels, the connexons, through which materials of low MW diffuse from one cell to a neighboring cell. This Mus musculus (Mouse) protein is Gap junction delta-2 protein (Gjd2).